We begin with the raw amino-acid sequence, 153 residues long: SsrA-binding protein (153 aa).

Residues 131–153 form a disordered region; the sequence is EYDKRDSIRERDDRREMDRAFKR.

This sequence belongs to the SmpB family.

The protein localises to the cytoplasm. In terms of biological role, required for rescue of stalled ribosomes mediated by trans-translation. Binds to transfer-messenger RNA (tmRNA), required for stable association of tmRNA with ribosomes. tmRNA and SmpB together mimic tRNA shape, replacing the anticodon stem-loop with SmpB. tmRNA is encoded by the ssrA gene; the 2 termini fold to resemble tRNA(Ala) and it encodes a 'tag peptide', a short internal open reading frame. During trans-translation Ala-aminoacylated tmRNA acts like a tRNA, entering the A-site of stalled ribosomes, displacing the stalled mRNA. The ribosome then switches to translate the ORF on the tmRNA; the nascent peptide is terminated with the 'tag peptide' encoded by the tmRNA and targeted for degradation. The ribosome is freed to recommence translation, which seems to be the essential function of trans-translation. This is SsrA-binding protein from Parabacteroides distasonis (strain ATCC 8503 / DSM 20701 / CIP 104284 / JCM 5825 / NCTC 11152).